A 294-amino-acid polypeptide reads, in one-letter code: Uracil-DNA glycosylase (294 aa).

The active-site Proton acceptor is the Asp139.

It belongs to the uracil-DNA glycosylase (UDG) superfamily. UNG family.

The protein localises to the host nucleus. The catalysed reaction is Hydrolyzes single-stranded DNA or mismatched double-stranded DNA and polynucleotides, releasing free uracil.. Its function is as follows. Excises uracil residues from the DNA which can arise as a result of misincorporation of dUMP residues by DNA polymerase or deamination of cytosines. Therefore may reduce deleterious uracil incorporation into the viral genome, particularly in terminally differentiated cells which lack DNA repair enzymes. This chain is Uracil-DNA glycosylase (UL2), found in Human herpesvirus 2 (strain 333) (HHV-2).